We begin with the raw amino-acid sequence, 72 residues long: DNA-directed RNA polymerase subunit Rpo10 (72 aa).

Zn(2+) is bound by residues Cys7, Cys10, Cys45, and Cys46.

This sequence belongs to the archaeal Rpo10/eukaryotic RPB10 RNA polymerase subunit family. In terms of assembly, part of the RNA polymerase complex. It depends on Zn(2+) as a cofactor.

It localises to the cytoplasm. It catalyses the reaction RNA(n) + a ribonucleoside 5'-triphosphate = RNA(n+1) + diphosphate. DNA-dependent RNA polymerase (RNAP) catalyzes the transcription of DNA into RNA using the four ribonucleoside triphosphates as substrates. This chain is DNA-directed RNA polymerase subunit Rpo10, found in Methanopyrus kandleri (strain AV19 / DSM 6324 / JCM 9639 / NBRC 100938).